The sequence spans 262 residues: Indole-3-glycerol phosphate synthase (262 aa).

This sequence belongs to the TrpC family.

It catalyses the reaction 1-(2-carboxyphenylamino)-1-deoxy-D-ribulose 5-phosphate + H(+) = (1S,2R)-1-C-(indol-3-yl)glycerol 3-phosphate + CO2 + H2O. The protein operates within amino-acid biosynthesis; L-tryptophan biosynthesis; L-tryptophan from chorismate: step 4/5. The polypeptide is Indole-3-glycerol phosphate synthase (Thiobacillus denitrificans (strain ATCC 25259 / T1)).